The following is a 353-amino-acid chain: UPF0283 membrane protein YPTS_2342 (353 aa).

Helical transmembrane passes span 71–91 (MVTA…VQWV), 101–121 (IALG…GSVV), and 214–234 (ESAL…FIAW).

Belongs to the UPF0283 family.

It localises to the cell inner membrane. The polypeptide is UPF0283 membrane protein YPTS_2342 (Yersinia pseudotuberculosis serotype IB (strain PB1/+)).